Reading from the N-terminus, the 285-residue chain is Probable cobalamin biosynthesis protein CobD (285 aa).

4 consecutive transmembrane segments (helical) span residues 10 to 32 (LIDLMFGEPPAIIHPVVGFGKVI), 45 to 67 (YLDFLVGAISSLVVIGLAFILSH), 145 to 167 (VIAPLFYYLIFGLPGAVVYRAVN), and 266 to 283 (VYWIIVVEFLLIVAIILY).

It belongs to the CobD/CbiB family.

It localises to the cell membrane. It participates in cofactor biosynthesis; adenosylcobalamin biosynthesis. Converts cobyric acid to cobinamide by the addition of aminopropanol on the F carboxylic group. The polypeptide is Probable cobalamin biosynthesis protein CobD (Pyrococcus furiosus (strain ATCC 43587 / DSM 3638 / JCM 8422 / Vc1)).